The chain runs to 401 residues: Phosphoglycerate kinase (401 aa).

Residues 24 to 26 (DFN), Arg-40, 63 to 66 (HFGR), Arg-122, and Arg-155 each bind substrate. Residues Lys-206, Gly-297, Glu-328, and 357 to 360 (GGDS) contribute to the ATP site.

It belongs to the phosphoglycerate kinase family. Monomer.

The protein localises to the cytoplasm. The catalysed reaction is (2R)-3-phosphoglycerate + ATP = (2R)-3-phospho-glyceroyl phosphate + ADP. The protein operates within carbohydrate degradation; glycolysis; pyruvate from D-glyceraldehyde 3-phosphate: step 2/5. The polypeptide is Phosphoglycerate kinase (Acaryochloris marina (strain MBIC 11017)).